The following is a 541-amino-acid chain: Glucose-6-phosphate isomerase (541 aa).

The Proton donor role is filled by Glu346. Residues His377 and Lys506 contribute to the active site.

The protein belongs to the GPI family.

The protein localises to the cytoplasm. It carries out the reaction alpha-D-glucose 6-phosphate = beta-D-fructose 6-phosphate. The protein operates within carbohydrate biosynthesis; gluconeogenesis. It participates in carbohydrate degradation; glycolysis; D-glyceraldehyde 3-phosphate and glycerone phosphate from D-glucose: step 2/4. In terms of biological role, catalyzes the reversible isomerization of glucose-6-phosphate to fructose-6-phosphate. This Rhizobium leguminosarum bv. trifolii (strain WSM2304) protein is Glucose-6-phosphate isomerase.